A 207-amino-acid chain; its full sequence is LexA repressor (207 aa).

A DNA-binding region (H-T-H motif) is located at residues 28 to 48; it reads RAEIARRLGFKSPNAAEEHLK. Residues Ser126 and Lys163 each act as for autocatalytic cleavage activity in the active site.

This sequence belongs to the peptidase S24 family. As to quaternary structure, homodimer.

The catalysed reaction is Hydrolysis of Ala-|-Gly bond in repressor LexA.. In terms of biological role, represses a number of genes involved in the response to DNA damage (SOS response), including recA and lexA. In the presence of single-stranded DNA, RecA interacts with LexA causing an autocatalytic cleavage which disrupts the DNA-binding part of LexA, leading to derepression of the SOS regulon and eventually DNA repair. The polypeptide is LexA repressor (Marinomonas sp. (strain MWYL1)).